The primary structure comprises 465 residues: FAD-dependent monooxygenase pyr5 (465 aa).

Residues 1-16 (MRVLIIGGSIAGLTLA) form the signal peptide. Residues E30, G44, and R103 each contribute to the FAD site. The active site involves Y210. Residues D306 and A319 each coordinate FAD. The chain crosses the membrane as a helical span at residues 440–456 (PTFPLTVAGLCLVAIVI).

Belongs to the paxM FAD-dependent monooxygenase family. The cofactor is FAD.

The protein resides in the membrane. The catalysed reaction is 4-hydroxy-3-[(2E,6E)-farnesyl]-6-(pyridin-3-yl)-2H-pyran-2-one + NADPH + O2 + H(+) = 2-oxo-3-[(8S)-epoxy-(2E,6E)-farnesyl]-6-(pyridin-3-yl)-2H-pyran-4-olate + NADP(+) + H2O. It participates in secondary metabolite biosynthesis; terpenoid biosynthesis. Its function is as follows. FAD-dependent monooxygenase; part of the gene cluster that mediates the biosynthesis of pyripyropene A, a specific human acyl-coenzyme A:cholesterol acyltransferase 2 inhibitor. The first step of the pathway is the synthesis of nicotinyl-CoA from nicotinic acid by the nicotinic acid-CoA ligase pyr1. Nicotinyl-CoA is then a substrate of polyketide synthase pyr2 to produce 4-hydroxy-6-(3-pyridinyl)-2H-pyran-2-one (HPPO) which is further prenylated by the polyprenyl transferase pyr6 to yield farnesyl-HPPO. The next steps consist of an epoxidation of farnesyl-HPPO to epoxyfarnesyl-HPPO by FAD-dependent monooxygenase pyr5 and a cyclization of the terpenoid portion by the terpene cyclase pyr4 to yield deacetyl-pyripyropene E. The 2 cytochrome P450 monooxygenases pyr3 and pyr9, and the 2 acetyltransferases pyr7 and pyr8 are involved in the conversion of deacetyl-pyripyropene E into pyripyropene A through several cycles of oxidation and acetylation steps. Pyr7 acetylates deacetyl-pyripyropene E to pyripyropene E which is oxidized to 11-deacetyl-pyripyropene O by pyr3, which is in turn acetylated into pyripyropene O by pyr8. Pyripyropene O is then oxidized to deacetyl-pyripyropene A by pyr9. Deacetyl-pyripyropene A is finally acetylated to pyripyropene A by pyr8. This chain is FAD-dependent monooxygenase pyr5, found in Aspergillus fumigatus (strain ATCC MYA-4609 / CBS 101355 / FGSC A1100 / Af293) (Neosartorya fumigata).